A 205-amino-acid polypeptide reads, in one-letter code: Small ribosomal subunit protein uS5 (205 aa).

The tract at residues 1-25 (MSGAQRGQRGGERRGGRDDRRGQGA) is disordered. The span at 9–24 (RGGERRGGRDDRRGQG) shows a compositional bias: basic and acidic residues. An S5 DRBM domain is found at 30–93 (YIERVVAINR…EEAKKHFFRV (64 aa)).

This sequence belongs to the universal ribosomal protein uS5 family. In terms of assembly, part of the 30S ribosomal subunit. Contacts proteins S4 and S8.

With S4 and S12 plays an important role in translational accuracy. Its function is as follows. Located at the back of the 30S subunit body where it stabilizes the conformation of the head with respect to the body. This Nocardioides sp. (strain ATCC BAA-499 / JS614) protein is Small ribosomal subunit protein uS5.